Here is a 532-residue protein sequence, read N- to C-terminus: MAFSVEEISSILPNSLSANPRNVSQNTISPSFFKPSLKPYASKTLISLSCRRSLSPVFSAGTYVTNVDEDDKLHEECGVVGIHGDPEASRLSYLALHALQHRGQEGAGIVAANQNGLESITGVGLVSDVFTESKLNNLPGDIAIGHVRYSTSGASMLKNVQPFIASCKLGSLAVAHNGNFVNYKQLKTKLEEMGSIFITSSDTELVLHLIAKSKAKTFLLRVIDACEKLRGAYSMVFVFEDKLIAVRDPFGFRPLVMGRRSNGAVVFASETCALDLIDATYEREVCPGEIVVVDRNHGDSSMFMISHPEQKQCVFEHGYFSQPNSIVFGRSVYETRRMYGEILATVAPVDCDVVIAVPDSGTVAALGYAAKAGVPFQIGLLRSHYAKRTFIEPTQEIRDFAVKVKLSPVRAVLEGKRVVVVDDSIVRGTTSLKIVRMLRDAGAKEVHMRIALPPMIASCYYGVDTPRSQELISSKMSVEAIQKHINCDSLAFLPLDSLKGVYGPVESHRYCYACFTGKYPVTKTESEEADAS.

The N-terminal 59 residues, 1-59 (MAFSVEEISSILPNSLSANPRNVSQNTISPSFFKPSLKPYASKTLISLSCRRSLSPVFS), are a transit peptide targeting the chloroplast. The Nucleophile role is filled by C77. The region spanning 77–296 (CGVVGIHGDP…PGEIVVVDRN (220 aa)) is the Glutamine amidotransferase type-2 domain. Residues C313, C459, C511, and C514 each contribute to the [4Fe-4S] cluster site.

The protein in the C-terminal section; belongs to the purine/pyrimidine phosphoribosyltransferase family. Requires [4Fe-4S] cluster as cofactor. The cofactor is Mg(2+). Mostly expressed at low levels in leaves, and, to a lower extent, in cotyledons.

Its subcellular location is the plastid. The protein resides in the chloroplast stroma. It carries out the reaction 5-phospho-beta-D-ribosylamine + L-glutamate + diphosphate = 5-phospho-alpha-D-ribose 1-diphosphate + L-glutamine + H2O. It participates in purine metabolism; IMP biosynthesis via de novo pathway; N(1)-(5-phospho-D-ribosyl)glycinamide from 5-phospho-alpha-D-ribose 1-diphosphate: step 1/2. Inhibited by the phenyltriazole acetic acid compound [5-(4-chlorophenyl)-1-isopropyl-1H-[1,2,4]triazol-3-yl]-acetic acid (DAS734), a bleaching herbicide. Repressed by AMP, ADP, ATP and GTP, and slightly by GMP. Catalyzes the first committed step of 'de novo' purine biosynthesis from glutamine. The chain is Amidophosphoribosyltransferase 3, chloroplastic (ASE3) from Arabidopsis thaliana (Mouse-ear cress).